Here is a 358-residue protein sequence, read N- to C-terminus: MSVAPLKNDVFLRALLREPVPYTPIWLMRQAGRYLPEYNATRARAGSFMGLAQNPDYACEVTLQPLARYPLDAAILFSDILTVPHAMGLGLDFAPGEGPRFAHPVRDESDVAKLAVPDMDSLRYVFDAVRTIRRELDGRVPLIGFAGSPWTIACYMVEGRGSDDYRLIKSMLYGRPDLLHRILEINAEATRHYLNAQIDAGAQAVMLFDSWGGVLADGLFQQFSLAYTRRVVEGLTREREGRRVPVIVFSKGGGQWLEEIAACGCDAVGLDWTVNLGTARRRVADAVALQGNLDPMTLFGGAQAVRAEARRTLDAFGPVGKGGHVFNLGHGISQYSPPEVVSELVDEVHTYSRALHAG.

Residues 29–33, Phe-48, Asp-79, Tyr-155, Ser-210, and His-330 contribute to the substrate site; that span reads RQAGR.

It belongs to the uroporphyrinogen decarboxylase family. As to quaternary structure, homodimer.

Its subcellular location is the cytoplasm. The enzyme catalyses uroporphyrinogen III + 4 H(+) = coproporphyrinogen III + 4 CO2. Its pathway is porphyrin-containing compound metabolism; protoporphyrin-IX biosynthesis; coproporphyrinogen-III from 5-aminolevulinate: step 4/4. In terms of biological role, catalyzes the decarboxylation of four acetate groups of uroporphyrinogen-III to yield coproporphyrinogen-III. This is Uroporphyrinogen decarboxylase from Bordetella parapertussis (strain 12822 / ATCC BAA-587 / NCTC 13253).